The sequence spans 332 residues: Adenosine deaminase (332 aa).

Residues His12 and His14 each coordinate Zn(2+). The substrate site is built by His14, Asp16, and Gly170. A Zn(2+)-binding site is contributed by His197. Residue Glu200 is the Proton donor of the active site. Asp278 is a binding site for Zn(2+).

The protein belongs to the metallo-dependent hydrolases superfamily. Adenosine and AMP deaminases family. Adenosine deaminase subfamily. Requires Zn(2+) as cofactor.

It catalyses the reaction adenosine + H2O + H(+) = inosine + NH4(+). It carries out the reaction 2'-deoxyadenosine + H2O + H(+) = 2'-deoxyinosine + NH4(+). Its function is as follows. Catalyzes the hydrolytic deamination of adenosine and 2-deoxyadenosine. In Clostridium perfringens (strain ATCC 13124 / DSM 756 / JCM 1290 / NCIMB 6125 / NCTC 8237 / Type A), this protein is Adenosine deaminase.